Reading from the N-terminus, the 1034-residue chain is Potassium-transporting ATPase alpha chain 1 (1034 aa).

Residues 1 to 97 lie on the Cytoplasmic side of the membrane; sequence MGKAENYEMY…NALRPPRGTP (97 aa). A phosphotyrosine mark is found at Tyr-7 and Tyr-10. Positions 14 to 41 are disordered; that stretch reads LGPGPGGDMAAKMSKKKAGKGGGKKKEK. Basic residues predominate over residues 26–39; it reads MSKKKAGKGGGKKK. Ser-27 is subject to Phosphoserine. A helical transmembrane segment spans residues 98-118; sequence EYVKFARQLAGGLQCLMWVAA. Topologically, residues 119–141 are lumenal; that stretch reads AICLIAFAIQASEGDLTTDDNLY. A helical transmembrane segment spans residues 142–162; sequence LALALIAVVVVTGCFGYYQEF. Over 163 to 298 the chain is Cytoplasmic; the sequence is KSTNIIASFK…NEKTPIAIEI (136 aa). Over residues 225–239 the composition is skewed to polar residues; that stretch reads NSSLTGESEPQTRSP. Positions 225 to 245 are disordered; sequence NSSLTGESEPQTRSPECTHES. The helical transmembrane segment at 299–318 threads the bilayer; sequence EHFVDIIAGLAILFGATFFV. The Lumenal segment spans residues 319-330; sequence VAMCIGYTFLRA. The chain crosses the membrane as a helical span at residues 331-348; it reads MVFFMAIVVAYVPEGLLA. The K(+) site is built by Val-339, Ala-340, Val-342, and Glu-344. The Cytoplasmic segment spans residues 349-782; the sequence is TVTVCLSLTA…EQGRLIFDNL (434 aa). Asp-386 functions as the 4-aspartylphosphate intermediate in the catalytic mechanism. Mg(2+) is bound by residues Asp-386 and Thr-388. Phosphoserine is present on residues Ser-462 and Ser-600. Asp-727 and Asp-731 together coordinate Mg(2+). The chain crosses the membrane as a helical span at residues 783-802; that stretch reads KKSIAYTLTKNIPELTPYLI. Glu-796 serves as a coordination point for K(+). Topologically, residues 803–812 are lumenal; that stretch reads YITVSVPLPL. The helical transmembrane segment at 813 to 833 threads the bilayer; that stretch reads GCITILFIELCTDIFPSVSLA. Glu-821 lines the K(+) pocket. The Cytoplasmic portion of the chain corresponds to 834–853; sequence YEKAESDIMHLRPRNPKRDR. The residue at position 839 (Ser-839) is a Phosphoserine. Residues 854–876 form a helical membrane-spanning segment; sequence LVNEPLAAYSYFQIGAIQSFAGF. Residues 877-928 are Lumenal-facing; it reads TDYFTAMAQEGWFPLLCVGLRPYWENHHLQDLQDSYGQEWTFGQRLYQQYTC. The helical transmembrane segment at 929–948 threads the bilayer; the sequence is YTVFFISIEMCQIADVLIRK. The Cytoplasmic portion of the chain corresponds to 949–962; that stretch reads TRRLSAFQQGFFRN. Ser-953 is modified (phosphoserine; by PKA). The chain crosses the membrane as a helical span at residues 963-981; that stretch reads RILVIAIVFQVCIGCFLCY. The Lumenal segment spans residues 982–996; sequence CPGMPNIFNFMPIRY. The helical transmembrane segment at 997–1017 threads the bilayer; sequence QWWLVPMPFGLLIFVYDEIRK. Over 1018 to 1034 the chain is Cytoplasmic; it reads LGVRCCPGSWWDQELYY.

Belongs to the cation transport ATPase (P-type) (TC 3.A.3) family. Type IIC subfamily. In terms of assembly, the gastric H(+)/K(+) ATPase pump is composed of the catalytic alpha subunit ATP4A and the regulatory beta subunit ATP4B. Interacts (via the P-domain) with ATP4B (via N-terminus); this interaction stabilizes the lumenal-open E2 conformation state and prevents the reverse reaction of the transport cycle.

The protein resides in the apical cell membrane. It catalyses the reaction K(+)(out) + ATP + H2O + H(+)(in) = K(+)(in) + ADP + phosphate + 2 H(+)(out). Its function is as follows. The catalytic subunit of the gastric H(+)/K(+) ATPase pump which transports H(+) ions in exchange for K(+) ions across the apical membrane of parietal cells. Uses ATP as an energy source to pump H(+) ions to the gastric lumen while transporting K(+) ion from the lumen into the cell. Remarkably generates a million-fold proton gradient across the gastric parietal cell membrane, acidifying the gastric juice down to pH 1. Within a transport cycle, the transfer of a H(+) ion across the membrane is coupled to ATP hydrolysis and is associated with a transient phosphorylation that shifts the pump conformation from inward-facing (E1) to outward-facing state (E2). The release of the H(+) ion in the stomach lumen is followed by binding of K(+) ion converting the pump conformation back to the E1 state. In Canis lupus familiaris (Dog), this protein is Potassium-transporting ATPase alpha chain 1 (ATP4A).